Reading from the N-terminus, the 1645-residue chain is Histone-lysine N-methyltransferase set-26 (1645 aa).

5 disordered regions span residues 1 to 82 (MADG…QQIP), 109 to 132 (EPAAAADSRPLTEEEQLAAERPTE), 200 to 228 (DAVGPGSPGTQYRRNQQTGGGLPSTSVAP), 417 to 606 (TPEQ…VLRP), and 651 to 789 (TGQS…DEAA). Low complexity-rich tracts occupy residues 16 to 31 (EQPPLQQQQPEIAEPI) and 67 to 82 (QEFYQEPQIPEPQQIP). Over residues 207–228 (PGTQYRRNQQTGGGLPSTSVAP) the composition is skewed to polar residues. Low complexity-rich tracts occupy residues 429–443 (RQRAAPQFPAAAAQR) and 453–467 (RPGASSSRAPRPSMA). Residues 559-578 (MTQEEKNAHFARLTTDKEKP) are compositionally biased toward basic and acidic residues. A compositionally biased stretch (pro residues) spans 592 to 603 (PHVPPPPPPPLV). Residues 651-675 (TGQSGSSAAARQRTVSGSAARAQTY) are compositionally biased toward polar residues. 2 stretches are compositionally biased toward basic residues: residues 684 to 699 (QHHHQMPMDQRKRHSS) and 731 to 741 (HRPRGRPKGTR). Over residues 780–789 (SESEGIDEAA) the composition is skewed to acidic residues. The PHD-type zinc finger occupies 794–842 (TMRCHCGMDHGDGDTIECEGCKTWQHMACMGLTLKSNTSKYKCEMCLPR). A disordered region spans residues 865–904 (AAKKQKRKSEPVEQKQKSQPSTSRKSAPMALQQQPAEPRV). A compositionally biased stretch (polar residues) spans 881 to 899 (KSQPSTSRKSAPMALQQQP). The 92-residue stretch at 973-1064 (MSNEVKRQPG…RNTEVTLPFD (92 aa)) folds into the SET domain. Over residues 1099–1172 (RHRAMDHKKR…EAKERKKMEV (74 aa)) the composition is skewed to basic and acidic residues. Disordered regions lie at residues 1099–1333 (RHRA…SKNV), 1371–1536 (SGLL…STEG), and 1548–1645 (PLDD…TRWN). The stretch at 1103-1217 (MDHKKREAEE…GKRKEARRRS (115 aa)) forms a coiled coil. A compositionally biased stretch (low complexity) spans 1173-1183 (EASAAAAPESS). The segment covering 1188 to 1210 (AREERRIQQAEEMFRRQEEEGKR) has biased composition (basic and acidic residues). 2 stretches are compositionally biased toward polar residues: residues 1258–1268 (TTQPSTSSFAT) and 1300–1311 (TVATPKDTTASN). Composition is skewed to basic and acidic residues over residues 1382-1427 (SEVR…KKAN), 1434-1450 (KSEKAVEKAVEKVEKKP), and 1468-1485 (KKTEEVDGIEREASESSS). Polar residues predominate over residues 1554-1565 (SSSNTAPTTTIA).

This sequence belongs to the class V-like SAM-binding methyltransferase superfamily. Expressed both in the germline and in somatic tissues.

It is found in the nucleus. The catalysed reaction is L-lysyl(9)-[histone H3] + 3 S-adenosyl-L-methionine = N(6),N(6),N(6)-trimethyl-L-lysyl(9)-[histone H3] + 3 S-adenosyl-L-homocysteine + 3 H(+). Functionally, histone methyltransferase that mediates trimethylation of 'Lys-9' of histone H3 in vitro. Involved in transcriptional regulation. Plays a role in the negative regulation of lifespan and in heat resistance. Together with set-9, negatively regulates lifespan in a germline-independent, partially daf-16-dependent fashion. Together with set-9, plays a role in germline development and maintenance and might play a role in the restriction of the trimethylation mark on histone H3 'Lys-4'(H3K4me3) to target genes specifically in the germline. Together with spr-5, required for transgenerational fertility. The protein is Histone-lysine N-methyltransferase set-26 of Caenorhabditis elegans.